A 445-amino-acid polypeptide reads, in one-letter code: Probable D-serine dehydratase (445 aa).

Residue K111 is modified to N6-(pyridoxal phosphate)lysine.

Belongs to the serine/threonine dehydratase family. DsdA subfamily. The cofactor is pyridoxal 5'-phosphate.

The enzyme catalyses D-serine = pyruvate + NH4(+). This is Probable D-serine dehydratase from Burkholderia pseudomallei (strain K96243).